Consider the following 58-residue polypeptide: Isocitrate lyase (58 aa).

It belongs to the isocitrate lyase/PEP mutase superfamily. Isocitrate lyase family. As to quaternary structure, homotetramer. The cofactor is Mg(2+).

The protein resides in the glyoxysome. The catalysed reaction is D-threo-isocitrate = glyoxylate + succinate. It functions in the pathway carbohydrate metabolism; glyoxylate cycle; (S)-malate from isocitrate: step 1/2. Involved in storage lipid mobilization during the growth of higher plant seedling. This is Isocitrate lyase from Helianthus annuus (Common sunflower).